The primary structure comprises 144 residues: Large ribosomal subunit protein uL13 (144 aa).

It belongs to the universal ribosomal protein uL13 family. In terms of assembly, part of the 50S ribosomal subunit.

Functionally, this protein is one of the early assembly proteins of the 50S ribosomal subunit, although it is not seen to bind rRNA by itself. It is important during the early stages of 50S assembly. This Herpetosiphon aurantiacus (strain ATCC 23779 / DSM 785 / 114-95) protein is Large ribosomal subunit protein uL13.